The sequence spans 484 residues: Ubiquinone biosynthesis monooxygenase COQ6, mitochondrial (484 aa).

A mitochondrion-targeting transit peptide spans 1 to 41 (MLSLAKAKLAVVGIGRQCVAVRTLNGARAVHRSFSSSEHDQ).

It belongs to the UbiH/COQ6 family. As to quaternary structure, component of a multi-subunit COQ enzyme complex, composed of at least coq3, coq4, coq5, coq6, coq7 and coq9. Interacts with coq8b and coq7. It depends on FAD as a cofactor.

The protein resides in the mitochondrion inner membrane. The protein localises to the golgi apparatus. It is found in the cell projection. The enzyme catalyses a 4-hydroxy-3-(all-trans-polyprenyl)benzoate + 2 reduced [2Fe-2S]-[ferredoxin] + O2 + 2 H(+) = a 3,4-dihydroxy-5-(all-trans-polyprenyl)benzoate + 2 oxidized [2Fe-2S]-[ferredoxin] + H2O. It catalyses the reaction a 2-methoxy-6-(all-trans-polyprenyl)phenol + 2 reduced [2Fe-2S]-[ferredoxin] + O2 + 2 H(+) = a 2-methoxy-6-(all-trans-polyprenyl)benzene-1,4-diol + 2 oxidized [2Fe-2S]-[ferredoxin] + H2O. Its pathway is cofactor biosynthesis; ubiquinone biosynthesis. Its function is as follows. FAD-dependent monooxygenase required for two non-consecutive steps during ubiquinone biosynthesis. Required for the C5-ring hydroxylation during ubiquinone biosynthesis by catalyzing the hydroxylation of 4-hydroxy-3-(all-trans-polyprenyl)benzoic acid to 3,4-dihydroxy-5-(all-trans-polyprenyl)benzoic acid. Also acts downstream of coq4, for the C1-hydroxylation during ubiquinone biosynthesis by catalyzing the hydroxylation of 2-methoxy-6-(all-trans-polyprenyl)phenol to 2-methoxy-6-(all-trans-polyprenyl)benzene-1,4-diol. The electrons required for the hydroxylation reaction are funneled indirectly to coq6 from NADPH via a ferredoxin/ferredoxin reductase system. The polypeptide is Ubiquinone biosynthesis monooxygenase COQ6, mitochondrial (Danio rerio (Zebrafish)).